The following is a 202-amino-acid chain: ATP-dependent Clp protease proteolytic subunit (202 aa).

Ser-101 functions as the Nucleophile in the catalytic mechanism. His-126 is a catalytic residue.

This sequence belongs to the peptidase S14 family. Component of the chloroplastic Clp protease core complex.

The protein localises to the plastid. The protein resides in the chloroplast stroma. The catalysed reaction is Hydrolysis of proteins to small peptides in the presence of ATP and magnesium. alpha-casein is the usual test substrate. In the absence of ATP, only oligopeptides shorter than five residues are hydrolyzed (such as succinyl-Leu-Tyr-|-NHMec, and Leu-Tyr-Leu-|-Tyr-Trp, in which cleavage of the -Tyr-|-Leu- and -Tyr-|-Trp bonds also occurs).. Functionally, cleaves peptides in various proteins in a process that requires ATP hydrolysis. Has a chymotrypsin-like activity. Plays a major role in the degradation of misfolded proteins. In Platanus occidentalis (Sycamore), this protein is ATP-dependent Clp protease proteolytic subunit.